A 190-amino-acid chain; its full sequence is dCTP deaminase, dUMP-forming (190 aa).

DCTP-binding positions include 101–106 (KSSLGR), aspartate 119, 127–129 (TLE), glutamine 148, tyrosine 162, and glutamine 174. The active-site Proton donor/acceptor is the glutamate 129. Positions 163–190 (GSTRVGSKYQGQRGPTPSRSYQNFITST) are disordered. The span at 171 to 190 (YQGQRGPTPSRSYQNFITST) shows a compositional bias: polar residues.

Belongs to the dCTP deaminase family. In terms of assembly, homotrimer.

It catalyses the reaction dCTP + 2 H2O = dUMP + NH4(+) + diphosphate. Its pathway is pyrimidine metabolism; dUMP biosynthesis; dUMP from dCTP: step 1/1. In terms of biological role, bifunctional enzyme that catalyzes both the deamination of dCTP to dUTP and the hydrolysis of dUTP to dUMP without releasing the toxic dUTP intermediate. In Mycolicibacterium paratuberculosis (strain ATCC BAA-968 / K-10) (Mycobacterium paratuberculosis), this protein is dCTP deaminase, dUMP-forming.